A 212-amino-acid chain; its full sequence is Shuttling pre-60S factor ECM1 (212 aa).

Disordered stretches follow at residues 28-48 (KISK…EVKD) and 188-212 (SLAE…DVEE). Residue S188 is modified to Phosphoserine. Over residues 191–201 (EDNTVQKTPTN) the composition is skewed to polar residues.

This sequence belongs to the ECM1 family. As to quaternary structure, associates with the pre-60S ribosomal particle and the nucleopore complex.

The protein localises to the nucleus. It localises to the nucleolus. Its subcellular location is the cytoplasm. In terms of biological role, pre-ribosomal factor involved in 60S ribosomal protein subunit export from the nucleus. This Saccharomyces cerevisiae (strain ATCC 204508 / S288c) (Baker's yeast) protein is Shuttling pre-60S factor ECM1 (ECM1).